The sequence spans 390 residues: MDLKTKYYLKSKFQEYYRTAKIHLPAKLPEREWGVLSFDDMPETVMRRHKSFGSAGEVEDYLTGMAPAHVYYSVAYYTYPNAPTMKEKQWLAADLIFDLDADHIPGAPNSYSDMLDHVKKETLKLYDLLTDDFGFKEEDIGAVFSGGRGYHFHISDPRVLSLESAERREIVDYISGRGLNLDKIFVKKGVSGDAGSEKATMNVFPSEDDGGWGGRINHHMIAYLRELAAKEDAEKLFTGFDRIGKKTAKRIVEILRDETQVDLLKKGNMEALSRVNKDIIQTLAERSVTELSASVDEPVTGDIKRLIRLPGSLHGKSGMCVTSLSISQLEDFDPLNDAIVFSDKPVKLKVIRTFAVQMKGKDLHVEEGVQELPEYAAIYLMCRGAAEYGP.

Residues D98, D100, and D296 contribute to the active site.

It belongs to the eukaryotic-type primase small subunit family. Heterodimer of a small subunit (PriS) and a large subunit (PriL). Requires Mg(2+) as cofactor. Mn(2+) serves as cofactor.

Its function is as follows. Catalytic subunit of DNA primase, an RNA polymerase that catalyzes the synthesis of short RNA molecules used as primers for DNA polymerase during DNA replication. The small subunit contains the primase catalytic core and has DNA synthesis activity on its own. Binding to the large subunit stabilizes and modulates the activity, increasing the rate of DNA synthesis while decreasing the length of the DNA fragments, and conferring RNA synthesis capability. The DNA polymerase activity may enable DNA primase to also catalyze primer extension after primer synthesis. May also play a role in DNA repair. The protein is DNA primase small subunit PriS of Methanococcoides burtonii (strain DSM 6242 / NBRC 107633 / OCM 468 / ACE-M).